The following is a 323-amino-acid chain: tRNA-modifying protein YgfZ (323 aa).

Folate contacts are provided by tryptophan 29 and tryptophan 182.

Belongs to the tRNA-modifying YgfZ family.

It is found in the cytoplasm. Its function is as follows. Folate-binding protein involved in regulating the level of ATP-DnaA and in the modification of some tRNAs. It is probably a key factor in regulatory networks that act via tRNA modification, such as initiation of chromosomal replication. The sequence is that of tRNA-modifying protein YgfZ from Vibrio cholerae serotype O1 (strain M66-2).